The sequence spans 40 residues: Photosystem II reaction center protein L (40 aa).

Residues 19–39 (SLYWGLLLIFVLAVLFSNYFF) traverse the membrane as a helical segment.

This sequence belongs to the PsbL family. PSII is composed of 1 copy each of membrane proteins PsbA, PsbB, PsbC, PsbD, PsbE, PsbF, PsbH, PsbI, PsbJ, PsbK, PsbL, PsbM, PsbT, PsbX, PsbY, PsbZ, Psb30/Ycf12, at least 3 peripheral proteins of the oxygen-evolving complex and a large number of cofactors. It forms dimeric complexes.

The protein localises to the plastid. It localises to the chloroplast thylakoid membrane. Functionally, one of the components of the core complex of photosystem II (PSII). PSII is a light-driven water:plastoquinone oxidoreductase that uses light energy to abstract electrons from H(2)O, generating O(2) and a proton gradient subsequently used for ATP formation. It consists of a core antenna complex that captures photons, and an electron transfer chain that converts photonic excitation into a charge separation. This subunit is found at the monomer-monomer interface and is required for correct PSII assembly and/or dimerization. This Nandina domestica (Heavenly bamboo) protein is Photosystem II reaction center protein L.